An 809-amino-acid polypeptide reads, in one-letter code: F-BAR domain only protein 2 (809 aa).

Residues 3–250 (MAHFVENFWG…NMANTTIESL (248 aa)) enclose the F-BAR domain. Positions 3 to 274 (MAHFVENFWG…PGLIEFEECD (272 aa)) are mediates dimerization and binding to membranes enriched in Pi(4,5)-P2 and induces their tubulation. Residues 87–156 (HLDLVRKLQE…CVEQERLKKE (70 aa)) are a coiled coil. Residue lysine 297 forms a Glycyl lysine isopeptide (Lys-Gly) (interchain with G-Cter in SUMO2) linkage. The interval 301-352 (DAESVECPDADSLNIPDVDEEGFSIKPEANQNDTKENHFYSSSDSDSEDEEP) is disordered. The residue at position 312 (serine 312) is a Phosphoserine. At threonine 385 the chain carries Phosphothreonine. Phosphoserine is present on residues serine 387, serine 394, serine 402, and serine 403. Over residues 390 to 416 (VSRHSPVQMNRNSSNEELTKSKPSSLP) the composition is skewed to polar residues. 2 disordered regions span residues 390–422 (VSRH…KGTN) and 435–536 (LESS…PVSL). The span at 435-456 (LESSSAPLTSSSSARPTTPLSL) shows a compositional bias: low complexity. A phosphoserine mark is found at serine 487, serine 492, serine 495, serine 507, serine 509, serine 510, and serine 532. Positions 501-520 (PLARAESSSSISSSASLSAA) are enriched in low complexity. The tract at residues 520 to 809 (ANTPTVGVSR…FATGRYLADC (290 aa)) is mediates interaction with DAB2, EPS15, EPS15R and ITSN1. Residues 541–808 (TLPVAIALTE…RFATGRYLAD (268 aa)) form the MHD domain.

It belongs to the FCHO family. Homodimer; disulfide-linked. May form homotetramer. Interacts with AP2A1. Interacts with EPS15, EPS15R, ITSN1 and ITSN2; recruit those scaffolding proteins which in turn may interact with the adaptor protein complex AP-2 at the plasma membrane. Interacts with DAB2 (via DPF motifs); mediates LDL receptor/LDLR endocytosis. Ubiquitinated. Mainly undergoes monoubiquitination but also polyubiquitination. In terms of tissue distribution, ubiquitously expressed (at protein level).

Its subcellular location is the membrane. The protein localises to the clathrin-coated pit. In terms of biological role, functions in an early step of clathrin-mediated endocytosis. Has both a membrane binding/bending activity and the ability to recruit proteins essential to the formation of functional clathrin-coated pits. Has a lipid-binding activity with a preference for membranes enriched in phosphatidylserine and phosphoinositides (Pi(4,5) biphosphate) like the plasma membrane. Its membrane-bending activity might be important for the subsequent action of clathrin and adaptors in the formation of clathrin-coated vesicles. Involved in adaptor protein complex AP-2-dependent endocytosis of the transferrin receptor, it also functions in the AP-2-independent endocytosis of the LDL receptor. This Mus musculus (Mouse) protein is F-BAR domain only protein 2 (Fcho2).